The sequence spans 112 residues: MTTPQVKTGLFVGLNKGHVVTRRELAPRPRSRKGKTSKRTIFIRNLIKEVAGQAPYEKRITELLKVGKDKRALKVAKRKLGTHKRAKRKREEMSSVLRKMRSGGGGATEKKK.

The segment covering 79 to 88 has biased composition (basic residues); it reads KLGTHKRAKR. The interval 79 to 112 is disordered; sequence KLGTHKRAKRKREEMSSVLRKMRSGGGGATEKKK. A compositionally biased stretch (gly residues) spans 102–112; it reads SGGGGATEKKK.

Belongs to the eukaryotic ribosomal protein eL36 family.

The sequence is that of Large ribosomal subunit protein eL36y (RPL36B) from Arabidopsis thaliana (Mouse-ear cress).